Reading from the N-terminus, the 466-residue chain is Gamma-glutamylpolyamine synthetase GlnA3 (466 aa).

A GS catalytic domain is found at Gly-127 to Tyr-466. Mg(2+) is bound by residues Glu-151 and Glu-153. Glu-202 is an ATP binding site. The Mg(2+) site is built by Glu-207 and Glu-214. Residue Gly-259 coordinates L-glutamate. His-263 lines the Mg(2+) pocket. ATP is bound at residue Ser-267. Residues Arg-316 and Arg-334 each contribute to the L-glutamate site. Arg-334 and Arg-339 together coordinate ATP. Glu-355 serves as a coordination point for Mg(2+).

It belongs to the glutamine synthetase family. It depends on Mg(2+) as a cofactor. Expressed in mycelium.

It carries out the reaction spermine + L-glutamate + ATP = gamma-L-glutamylspermine + ADP + phosphate + H(+). The enzyme catalyses spermidine + L-glutamate + ATP = gamma-L-glutamylspermidine + ADP + phosphate + H(+). It catalyses the reaction putrescine + L-glutamate + ATP = gamma-L-glutamylputrescine + ADP + phosphate + H(+). The catalysed reaction is cadaverine + L-glutamate + ATP = gamma-L-glutamylcadaverine + ADP + phosphate + H(+). It participates in amine and polyamine degradation; putrescine degradation. Its pathway is amine and polyamine degradation; spermidine degradation. The protein operates within amine and polyamine degradation; spermine degradation. Functionally, involved in the catabolism of polyamines. Catalyzes the ATP-dependent gamma-glutamylation of polyamines. Substrates include putrescine, cadaverine, spermidine and spermine, with a preference for long-chain polyamines spermidine and spermine. Is not able to compensate for the loss of glutamine synthetases (GSs). No complementation of the L-glutamine auxotrophy of an E.coli glnA mutant. Involved in morphological differentiation and in the production of secondary metabolites. Together with GlnA2, enables survival of S.coelicolor under exposure to high local environmental polyamine concentrations, which is toxic to the cells. The chain is Gamma-glutamylpolyamine synthetase GlnA3 from Streptomyces coelicolor (strain ATCC BAA-471 / A3(2) / M145).